Reading from the N-terminus, the 290-residue chain is Ribosomal RNA small subunit methyltransferase A (290 aa).

Residues N27, L29, G54, E75, D100, and N125 each coordinate S-adenosyl-L-methionine.

The protein belongs to the class I-like SAM-binding methyltransferase superfamily. rRNA adenine N(6)-methyltransferase family. RsmA subfamily.

The protein localises to the cytoplasm. The catalysed reaction is adenosine(1518)/adenosine(1519) in 16S rRNA + 4 S-adenosyl-L-methionine = N(6)-dimethyladenosine(1518)/N(6)-dimethyladenosine(1519) in 16S rRNA + 4 S-adenosyl-L-homocysteine + 4 H(+). Specifically dimethylates two adjacent adenosines (A1518 and A1519) in the loop of a conserved hairpin near the 3'-end of 16S rRNA in the 30S particle. May play a critical role in biogenesis of 30S subunits. This chain is Ribosomal RNA small subunit methyltransferase A, found in Streptococcus pyogenes serotype M5 (strain Manfredo).